Here is a 428-residue protein sequence, read N- to C-terminus: Histone deacetylase 3 (428 aa).

The histone deacetylase stretch occupies residues 3-316 (NRTSYFYDPD…WTFETSLLLE (314 aa)). The 1D-myo-inositol 1,4,5,6-tetrakisphosphate site is built by His17, Gly21, and Lys25. The active site involves His135. The Zn(2+) site is built by Asp170, His172, and Asp259. Residue Arg265 coordinates 1D-myo-inositol 1,4,5,6-tetrakisphosphate. The segment at 385–428 (LNYERNDEPDPDERGAEENYTRPEAANEFYDGDHDNDKESDVEI) is disordered. Composition is skewed to basic and acidic residues over residues 386-405 (NYER…ENYT) and 415-428 (DGDH…DVEI).

Belongs to the histone deacetylase family. HD type 1 subfamily.

The protein resides in the nucleus. It is found in the chromosome. It localises to the cytoplasm. Its subcellular location is the cytosol. The enzyme catalyses N(6)-acetyl-L-lysyl-[histone] + H2O = L-lysyl-[histone] + acetate. Its activity is regulated as follows. Inositol tetraphosphate (1D-myo-inositol 1,4,5,6-tetrakisphosphate) promotes the histone deacetylase activity by acting as an intermolecular glue between hdac3 and N-Cor repressor complex components. In terms of biological role, responsible for the deacetylation of lysine residues on the N-terminal part of the core histones (H2A, H2B, H3 and H4). Histone deacetylation gives a tag for epigenetic repression and plays an important role in transcriptional regulation, cell cycle progression and developmental events. Histone deacetylases act via the formation of large multiprotein complexes, such as N-Cor repressor complex, which activate the histone deacetylase activity. May play a role in the regulation of the circadian clock in a deacetylase activity-independent manner. This Tetraodon nigroviridis (Spotted green pufferfish) protein is Histone deacetylase 3 (hdac3).